Consider the following 108-residue polypeptide: Anti-sigma-B factor antagonist (108 aa).

The 106-residue stretch at 3–108 folds into the STAS domain; that stretch reads LNIETTTQDK…MHVNEGTEVE (106 aa). At Ser57 the chain carries Phosphoserine.

This sequence belongs to the anti-sigma-factor antagonist family. Post-translationally, phosphorylated by RsbW on a serine residue.

Its function is as follows. Positive regulator of sigma-B activity. Non-phosphorylated RsbV binds to RsbW, preventing its association with sigma-B. When phosphorylated, releases RsbW, which is then free to complex with and inactivate sigma-B. The sequence is that of Anti-sigma-B factor antagonist (rsbV) from Staphylococcus aureus (strain NCTC 8325 / PS 47).